Here is a 433-residue protein sequence, read N- to C-terminus: Alpha-(1,3)-fucosyltransferase 4 (433 aa).

The Cytoplasmic segment spans residues methionine 1–arginine 52. The helical; Signal-anchor for type II membrane protein transmembrane segment at serine 53–glycine 74 threads the bilayer. At glutamine 75–arginine 433 the chain is on the lumenal side. N-linked (GlcNAc...) asparagine glycosylation is found at asparagine 117 and asparagine 218.

It belongs to the glycosyltransferase 10 family. As to expression, highest expression in stomach and colon. It is also expressed in the lung, testis, uterus, small intestine and to a lesser extent in spleen, and ovary. Present in trace amounts in brain, thymus, heart, smooth muscle, kidney and bone marrow. Not found in liver, salivary gland and pancreas.

It is found in the golgi apparatus. Its subcellular location is the golgi stack membrane. The catalysed reaction is a beta-D-galactosyl-(1-&gt;4)-N-acetyl-beta-D-glucosaminyl derivative + GDP-beta-L-fucose = a beta-D-galactosyl-(1-&gt;4)-[alpha-L-fucosyl-(1-&gt;3)]-N-acetyl-beta-D-glucosaminyl derivative + GDP + H(+). The enzyme catalyses an N-acetyl-alpha-neuraminyl-(2-&gt;3)-beta-D-galactosyl-(1-&gt;4)-N-acetyl-beta-D-glucosaminyl derivative + GDP-beta-L-fucose = an alpha-Neu5Ac-(2-&gt;3)-beta-D-Gal-(1-&gt;4)-[alpha-L-Fuc-(1-&gt;3)]-beta-D-GlcNAc derivative + GDP + H(+). It carries out the reaction an alpha-Neu5Ac-(2-&gt;3)-beta-D-Gal-(1-&gt;4)-beta-D-GlcNAc-(1-&gt;3)-beta-D-Gal-(1-&gt;4)-beta-D-GlcNAc derivative + GDP-beta-L-fucose = an alpha-Neu5Ac-(2-&gt;3)-beta-D-Gal-(1-&gt;4)-beta-D-GlcNAc-(1-&gt;3)-beta-D-Gal-(1-&gt;4)-[alpha-L-Fuc-(1-&gt;3)]-beta-D-GlcNAc derivative + GDP + H(+). It catalyses the reaction an alpha-Neu5Ac-(2-&gt;3)-beta-D-Gal-(1-&gt;4)-beta-D-GlcNAc6S derivative + GDP-beta-L-fucose = an alpha-Neu5Ac-(2-&gt;3)-beta-D-Gal-(1-&gt;4)-[alpha-L-Fuc-(1-&gt;3)]-beta-D-GlcNAc6S derivative + GDP + H(+). It functions in the pathway protein modification; protein glycosylation. In terms of biological role, catalyzes alpha(1-&gt;3) linkage of fucosyl moiety transferred from GDP-beta-L-fucose to N-acetyl glucosamine (GlcNAc) within type 2 lactosamine (LacNAc, Gal-beta(1-&gt;4)GlcNAc) glycan attached to N- or O-linked glycoproteins. Robustly fucosylates nonsialylated distal LacNAc unit of the polylactosamine chain to form Lewis X antigen (CD15), a glycan determinant known to mediate important cellular functions in development and immunity. Fucosylates with lower efficiency sialylated LacNAc acceptors to form sialyl Lewis X and 6-sulfo sialyl Lewis X determinants that serve as recognition epitopes for C-type lectins. Together with FUT7 contributes to SELE, SELL and SELP selectin ligand biosynthesis and selectin-dependent lymphocyte homing, leukocyte migration and blood leukocyte homeostasis. In a cell type specific manner, may also fucosylate the internal LacNAc unit of the polylactosamine chain to form VIM-2 antigen that serves as recognition epitope for SELE. This is Alpha-(1,3)-fucosyltransferase 4 (Fut4) from Mus musculus (Mouse).